The sequence spans 189 residues: Crossover junction endodeoxyribonuclease RuvC (189 aa).

Residues D7, E68, and D141 contribute to the active site. Residues D7, E68, and D141 each coordinate Mg(2+).

It belongs to the RuvC family. As to quaternary structure, homodimer which binds Holliday junction (HJ) DNA. The HJ becomes 2-fold symmetrical on binding to RuvC with unstacked arms; it has a different conformation from HJ DNA in complex with RuvA. In the full resolvosome a probable DNA-RuvA(4)-RuvB(12)-RuvC(2) complex forms which resolves the HJ. It depends on Mg(2+) as a cofactor.

It localises to the cytoplasm. The catalysed reaction is Endonucleolytic cleavage at a junction such as a reciprocal single-stranded crossover between two homologous DNA duplexes (Holliday junction).. In terms of biological role, the RuvA-RuvB-RuvC complex processes Holliday junction (HJ) DNA during genetic recombination and DNA repair. Endonuclease that resolves HJ intermediates. Cleaves cruciform DNA by making single-stranded nicks across the HJ at symmetrical positions within the homologous arms, yielding a 5'-phosphate and a 3'-hydroxyl group; requires a central core of homology in the junction. The consensus cleavage sequence is 5'-(A/T)TT(C/G)-3'. Cleavage occurs on the 3'-side of the TT dinucleotide at the point of strand exchange. HJ branch migration catalyzed by RuvA-RuvB allows RuvC to scan DNA until it finds its consensus sequence, where it cleaves and resolves the cruciform DNA. This is Crossover junction endodeoxyribonuclease RuvC from Chlorobium phaeovibrioides (strain DSM 265 / 1930) (Prosthecochloris vibrioformis (strain DSM 265)).